Here is a 102-residue protein sequence, read N- to C-terminus: MVRCRVRSPSERSHEVYRQQLHGQEQGHHGQEEQGLSPEHVEVYERTHGHSHYRRRHCSRRRLRRIHRQQHRSCRRRKRRSCRHRRRHRKGCRTRRRTCRRH.

Residues methionine 1–histidine 102 form a disordered region. Serine 8, serine 10, and serine 37 each carry phosphoserine. A compositionally biased stretch (basic and acidic residues) spans serine 8–tyrosine 17. Over residues glutamate 39–histidine 48 the composition is skewed to basic and acidic residues. Over residues glycine 49 to histidine 102 the composition is skewed to basic residues.

Belongs to the protamine P2 family. As to quaternary structure, interacts with TDRP. Proteolytic processing into mature chains is required for histone eviction during spermatogenesis. Transition proteins (TNP1 and TNP2) are required for processing. In terms of tissue distribution, testis.

It localises to the nucleus. The protein localises to the chromosome. Protamines substitute for histones in the chromatin of sperm during the haploid phase of spermatogenesis. They compact sperm DNA into a highly condensed, stable and inactive complex. The protein is Protamine-2 (PRM2) of Gorilla gorilla gorilla (Western lowland gorilla).